The following is a 572-amino-acid chain: Sulfate adenylyltransferase (572 aa).

Residues 1–169 (MANTPHGGVL…IQAINKLNHY (169 aa)) are N-terminal. The interval 170–394 (DYVGLRYTPA…LRESHPPRAK (225 aa)) is catalytic. Residue Gln197 coordinates sulfate. ATP contacts are provided by residues 197–200 (QTRN) and 291–294 (GRDH). Active-site residues include Thr198, Arg199, and Asn200. Arg199 provides a ligand contact to sulfate. Ala295 lines the sulfate pocket. Met333 provides a ligand contact to ATP. Positions 395 to 572 (QGFTIFLTGH…LLESQGFFGN (178 aa)) are allosteric regulation domain; adenylyl-sulfate kinase-like. Residues 434 to 437 (ETVR), Arg451, 477 to 478 (IA), and Lys515 each bind 3'-phosphoadenylyl sulfate.

This sequence in the N-terminal section; belongs to the sulfate adenylyltransferase family. In the C-terminal section; belongs to the APS kinase family. As to quaternary structure, homohexamer. Dimer of trimers.

It localises to the cytoplasm. The catalysed reaction is sulfate + ATP + H(+) = adenosine 5'-phosphosulfate + diphosphate. Its pathway is sulfur metabolism; hydrogen sulfide biosynthesis; sulfite from sulfate: step 1/3. Its activity is regulated as follows. Allosterically inhibited by 3'-phosphoadenosine 5'-phosphosulfate (PAPS). Functionally, catalyzes the first intracellular reaction of sulfate assimilation, forming adenosine-5'-phosphosulfate (APS) from inorganic sulfate and ATP. Plays an important role in sulfate activation as a component of the biosynthesis pathway of sulfur-containing amino acids. In Yarrowia lipolytica (strain CLIB 122 / E 150) (Yeast), this protein is Sulfate adenylyltransferase.